The following is a 270-amino-acid chain: Phosphatidylinositol transfer protein alpha isoform (270 aa).

Thr58, Lys60, Glu85, Asn89, Thr96, and Lys194 together coordinate a 1,2-diacyl-sn-glycero-3-phospho-(1D-myo-inositol). An N6-acetyllysine modification is found at Lys215. A compositionally biased stretch (basic and acidic residues) spans 250-263 (TKRQLDEMRQKDPV). The disordered stretch occupies residues 250–270 (TKRQLDEMRQKDPVKGMTADD).

It belongs to the PtdIns transfer protein family. PI transfer class I subfamily. Post-translationally, phosphorylated by PKC in a calcium and phosphatidylserine-dependent manner.

The protein resides in the cytoplasm. It is found in the nucleus. It catalyses the reaction a 1,2-diacyl-sn-glycero-3-phosphocholine(in) = a 1,2-diacyl-sn-glycero-3-phosphocholine(out). It carries out the reaction a 1,2-diacyl-sn-glycero-3-phospho-(1D-myo-inositol)(in) = a 1,2-diacyl-sn-glycero-3-phospho-(1D-myo-inositol)(out). Catalyzes the transfer of phosphatidylinositol (PI) and phosphatidylcholine (PC) between membranes. Shows a preference for PI and PC containing shorter saturated or monosaturated acyl chains at the sn-1 and sn-2 positions. Preference order for PC is C16:1 &gt; C16:0 &gt; C18:1 &gt; C18:0 &gt; C20:4 and for PI is C16:1 &gt; C16:0 &gt; C18:1 &gt; C18:0 &gt; C20:4 &gt; C20:3. The protein is Phosphatidylinositol transfer protein alpha isoform (PITPNA) of Oryctolagus cuniculus (Rabbit).